The chain runs to 683 residues: Protein zntD (683 aa).

A run of 3 helical transmembrane segments spans residues 12–32 (IIST…PYWM), 42–62 (LSWS…LHLF), and 79–99 (PFAA…ELII). Positions 120-129 (VHLSHGHSHH) are enriched in basic residues. Disordered stretches follow at residues 120-180 (VHLS…TTTT), 299-325 (GFSN…NNNN), 364-390 (CSND…TPNT), and 451-489 (IGNS…NNNN). The span at 137-149 (GNPGSGVGIGMGS) shows a compositional bias: gly residues. 2 stretches are compositionally biased toward low complexity: residues 160-180 (TTSP…TTTT) and 302-325 (NNNN…NNNN). The span at 451–465 (IGNSGNIGSNNNNNN) shows a compositional bias: low complexity. Over residues 466 to 475 (NGGGGGGGGN) the composition is skewed to gly residues. The segment covering 476–489 (SNIDYNDNEENNNN) has biased composition (low complexity). A run of 5 helical transmembrane segments spans residues 534 to 554 (ILLP…EGLA), 564 to 584 (VFDI…ALGI), 600 to 620 (FLLV…GMVI), 631 to 651 (PPIL…VEII), and 662 to 682 (ILIK…VAIW).

The protein belongs to the ZIP transporter (TC 2.A.5) family.

The protein localises to the membrane. Its function is as follows. May transport divalent cations. May participate, with dstA, in the regulation of the differentiation of stalk cells during development. The chain is Protein zntD (zntD) from Dictyostelium discoideum (Social amoeba).